A 413-amino-acid polypeptide reads, in one-letter code: Putative competence-damage inducible protein (413 aa).

The protein belongs to the CinA family.

In Lacticaseibacillus paracasei (strain ATCC 334 / BCRC 17002 / CCUG 31169 / CIP 107868 / KCTC 3260 / NRRL B-441) (Lactobacillus paracasei), this protein is Putative competence-damage inducible protein.